Consider the following 214-residue polypeptide: Nascent polypeptide-associated complex subunit alpha (214 aa).

The disordered stretch occupies residues 1–80; sequence MPGEATETVP…SEKKARKAMS (80 aa). The segment covering 29-40 has biased composition (acidic residues); sequence SDSDDSPPELEQ. Positions 41 to 56 are enriched in low complexity; that stretch reads DSTQTTTQQAQLAAAA. Residues 69 to 134 form the NAC-A/B domain; that stretch reads SRSEKKARKA…AKIEDLSQQA (66 aa). In terms of domain architecture, UBA spans 175 to 212; sequence VEVKDIELVMSQANVSRAKAVRALKNNSNDIVNAIMEL.

The protein belongs to the NAC-alpha family.

Its function is as follows. May promote appropriate targeting of ribosome-nascent polypeptide complexes. The polypeptide is Nascent polypeptide-associated complex subunit alpha (naca) (Xenopus tropicalis (Western clawed frog)).